Reading from the N-terminus, the 278-residue chain is Tryptophan synthase alpha chain (278 aa).

Catalysis depends on proton acceptor residues Glu-49 and Asp-60.

Belongs to the TrpA family. Tetramer of two alpha and two beta chains.

It catalyses the reaction (1S,2R)-1-C-(indol-3-yl)glycerol 3-phosphate + L-serine = D-glyceraldehyde 3-phosphate + L-tryptophan + H2O. The protein operates within amino-acid biosynthesis; L-tryptophan biosynthesis; L-tryptophan from chorismate: step 5/5. In terms of biological role, the alpha subunit is responsible for the aldol cleavage of indoleglycerol phosphate to indole and glyceraldehyde 3-phosphate. The polypeptide is Tryptophan synthase alpha chain (Granulibacter bethesdensis (strain ATCC BAA-1260 / CGDNIH1)).